The following is a 209-amino-acid chain: Imidazole glycerol phosphate synthase subunit HisH (209 aa).

The Glutamine amidotransferase type-1 domain maps to methionine 1 to serine 205. The Nucleophile role is filled by cysteine 79. Residues histidine 180 and glutamate 182 contribute to the active site.

As to quaternary structure, heterodimer of HisH and HisF.

The protein resides in the cytoplasm. The catalysed reaction is 5-[(5-phospho-1-deoxy-D-ribulos-1-ylimino)methylamino]-1-(5-phospho-beta-D-ribosyl)imidazole-4-carboxamide + L-glutamine = D-erythro-1-(imidazol-4-yl)glycerol 3-phosphate + 5-amino-1-(5-phospho-beta-D-ribosyl)imidazole-4-carboxamide + L-glutamate + H(+). It catalyses the reaction L-glutamine + H2O = L-glutamate + NH4(+). It functions in the pathway amino-acid biosynthesis; L-histidine biosynthesis; L-histidine from 5-phospho-alpha-D-ribose 1-diphosphate: step 5/9. Functionally, IGPS catalyzes the conversion of PRFAR and glutamine to IGP, AICAR and glutamate. The HisH subunit catalyzes the hydrolysis of glutamine to glutamate and ammonia as part of the synthesis of IGP and AICAR. The resulting ammonia molecule is channeled to the active site of HisF. The sequence is that of Imidazole glycerol phosphate synthase subunit HisH from Bacillus cereus (strain ATCC 14579 / DSM 31 / CCUG 7414 / JCM 2152 / NBRC 15305 / NCIMB 9373 / NCTC 2599 / NRRL B-3711).